Consider the following 263-residue polypeptide: Exosome complex component Rrp4 (263 aa).

One can recognise an S1 motif domain in the interval 51-127 (GKYIPSRKDF…KAMKVELSMR (77 aa)). Positions 135–196 (SKGRIIEVVP…DRLTTAIEMI (62 aa)) constitute a KH domain. A disordered region spans residues 213 to 263 (LRGEPEGTEGSDEEQLVDEEVAGVSLEDDDVTEETSRKVDVLLDNDTDETN). The segment covering 218–245 (EGTEGSDEEQLVDEEVAGVSLEDDDVTE) has biased composition (acidic residues).

This sequence belongs to the RRP4 family. In terms of assembly, component of the archaeal exosome complex. Forms a trimer of Rrp4 and/or Csl4 subunits. The trimer associates with a hexameric ring-like arrangement composed of 3 Rrp41-Rrp42 heterodimers.

The protein resides in the cytoplasm. In terms of biological role, non-catalytic component of the exosome, which is a complex involved in RNA degradation. Increases the RNA binding and the efficiency of RNA degradation. Confers strong poly(A) specificity to the exosome. In Methanococcoides burtonii (strain DSM 6242 / NBRC 107633 / OCM 468 / ACE-M), this protein is Exosome complex component Rrp4.